Here is a 636-residue protein sequence, read N- to C-terminus: LDL receptor repeat-containing protein egg-1 (636 aa).

The Cytoplasmic portion of the chain corresponds to 1 to 130 (MSSIAQKNRN…NHSNLFQCPS (130 aa)). A helical; Signal-anchor for type II membrane protein transmembrane segment spans residues 131 to 151 (VAIVLVLALVILGVLAAIPLT). Residues 152–636 (LMLTSSAQKM…VLKNSGRFPY (485 aa)) lie on the Extracellular side of the membrane. A glycan (N-linked (GlcNAc...) asparagine) is linked at Asn-202. 8 LDL-receptor class A domains span residues 205-243 (TCSG…ENCK), 244-296 (ECQS…AMCK), 298-335 (TCSK…NNCN), 336-375 (KCQK…QQCD), 378-415 (TCSG…ENCP), 457-499 (KCHP…KNCT), 503-541 (ECGI…QNCS), and 542-579 (QCAS…LKCS). 22 disulfides stabilise this stretch: Cys-213–Cys-233, Cys-227–Cys-242, Cys-245–Cys-273, Cys-251–Cys-286, Cys-280–Cys-295, Cys-299–Cys-312, Cys-306–Cys-325, Cys-319–Cys-334, Cys-337–Cys-365, Cys-359–Cys-374, Cys-379–Cys-392, Cys-387–Cys-405, Cys-399–Cys-414, Cys-458–Cys-476, Cys-466–Cys-489, Cys-483–Cys-498, Cys-504–Cys-518, Cys-514–Cys-531, Cys-525–Cys-540, Cys-543–Cys-556, Cys-550–Cys-569, and Cys-563–Cys-578. Residue Asn-508 is glycosylated (N-linked (GlcNAc...) asparagine). Asn-614 carries an N-linked (GlcNAc...) asparagine glycan.

It is found in the cell membrane. In terms of biological role, probable receptor which is required for the oocyte-to-zygote transition although its exact function is controversial. Seems to be required for fertilization probably by promoting the interaction or fusion between sperm and oocyte. Conversely, shown to be dispensable for fertilization but required for the formation of a continuous and cohesive eggshell chitin layer by maintaining a homogenous distribution of chitin synthase chs-1 at the unfertilized oocyte cell membrane. Appears to recruit or maintain together to the unfertilized oocyte cortex several proteins including chs-1, kinase mbk-2 and pseudophosphatases egg-3, and possibly egg-4 and egg-5. The protein is LDL receptor repeat-containing protein egg-1 of Caenorhabditis briggsae.